We begin with the raw amino-acid sequence, 357 residues long: Protein RecA (357 aa).

Residue glycine 71–threonine 78 coordinates ATP.

It belongs to the RecA family.

Its subcellular location is the cytoplasm. Its function is as follows. Can catalyze the hydrolysis of ATP in the presence of single-stranded DNA, the ATP-dependent uptake of single-stranded DNA by duplex DNA, and the ATP-dependent hybridization of homologous single-stranded DNAs. It interacts with LexA causing its activation and leading to its autocatalytic cleavage. This Ehrlichia chaffeensis (strain ATCC CRL-10679 / Arkansas) protein is Protein RecA.